Consider the following 132-residue polypeptide: Protein FasE (132 aa).

In Escherichia coli, this protein is Protein FasE (fasE).